We begin with the raw amino-acid sequence, 98 residues long: Probable sodium channel toxin Ts27 (98 aa).

The signal sequence occupies residues 1 to 22 (MYNMVSLFIVAVLLLTYANVEG). Cystine bridges form between C36–C88, C40–C63, C49–C68, and C53–C70.

The protein belongs to the long (4 C-C) scorpion toxin superfamily. Sodium channel inhibitor family. As to expression, expressed by the venom gland.

The protein localises to the secreted. In terms of biological role, probable sodium channel toxin. This is Probable sodium channel toxin Ts27 from Tityus serrulatus (Brazilian scorpion).